Reading from the N-terminus, the 233-residue chain is Pathogenesis-related thaumatin-like protein 3.2 (233 aa).

Residues 1-22 (MARAMHTVWIALVPTLFVFLQG) form the signal peptide. Cystine bridges form between Cys-36/Cys-232, Cys-77/Cys-87, Cys-92/Cys-98, Cys-145/Cys-221, Cys-151/Cys-204, Cys-159/Cys-169, Cys-173/Cys-182, and Cys-183/Cys-191. Asn-195 is a glycosylation site (N-linked (GlcNAc...) asparagine).

Belongs to the thaumatin family. As to expression, strongly expressed in roots and in female and male strobili, and, to a lower extent, in cotyledons, leaves, stems and pollen grains.

Its function is as follows. May be involved in disease resistance. This Cryptomeria japonica (Japanese cedar) protein is Pathogenesis-related thaumatin-like protein 3.2.